The sequence spans 2214 residues: Non-reducing polyketide synthase dpmpA (2214 aa).

Positions 75-178 are N-terminal acylcarrier protein transacylase domain (SAT); the sequence is EWIRTGDSHV…LAVCAGAWKD (104 aa). The region spanning 372–784 is the Ketosynthase family 3 (KS3) domain; it reads DESIAIVGAS…GNNTAMIVCQ (413 aa). Residues Cys-532, His-667, and His-707 each act as for beta-ketoacyl synthase activity in the active site. The interval 888–1184 is malonyl-CoA:ACP transacylase (MAT) domain; it reads VFAGQTGHRP…AFLSARLGSP (297 aa). Ser-974 acts as the For acyl/malonyl transferase activity in catalysis. Residues 1255 to 1389 are N-terminal hotdog fold; that stretch reads PQLVSVVRSS…GIIKSQEQDR (135 aa). Residues 1255-1566 form the PKS/mFAS DH domain; the sequence is PQLVSVVRSS…FSKVPVRSLQ (312 aa). Residues 1265–1560 are product template (PT) domain; that stretch reads GGADPEAAEF…AILGARFSKV (296 aa). Residues 1416–1566 are C-terminal hotdog fold; that stretch reads GASVVQGAFV…FSKVPVRSLQ (151 aa). Carrier domains lie at 1620 to 1695 and 1722 to 1802; these read NEVK…HSRL and KAST…SGAD. Ser-1654 carries the post-translational modification O-(pantetheine 4'-phosphoryl)serine. The tract at residues 1698–1728 is disordered; the sequence is VPQLSPHDTDRSSDLSAGQPPSTPKASTQEQ. The span at 1711-1726 shows a compositional bias: polar residues; it reads DLSAGQPPSTPKASTQ. At Ser-1762 the chain carries O-(pantetheine 4'-phosphoryl)serine. Residues 1805-1827 are disordered; that stretch reads GFPRTSDNRRSEEGSVGHVGPEK. Residues 1810-1827 show a composition bias toward basic and acidic residues; it reads SDNRRSEEGSVGHVGPEK. Residues 1958–2210 are methyltransferase (CMeT) domain; it reads FPAYRPDHRL…SREADLFRWI (253 aa).

The protein operates within secondary metabolite biosynthesis; terpenoid biosynthesis. Its function is as follows. Non-reducing polyketide synthase; part of the gene cluster that mediates the biosynthesis of diterpenoid pyrones. The first step of the pathway is the synthesis of the alpha-pyrone moiety by the polyketide synthase dpmpA via condensation of one acetyl-CoA starter unit with 3 malonyl-CoA units and 2 methylations. The alpha-pyrone is then combined with geranylgeranyl pyrophosphate (GGPP) formed by the GGPP synthase dpmpD through the action of the prenyltransferase dpmpC to yield a linear alpha-pyrone diterpenoid. Subsequent steps in the diterpenoid pyrone biosynthetic pathway involve the decalin core formation, which is initiated by the epoxidation of the C10-C11 olefin by the FAD-dependent oxidoreductase dpmpE, and is followed by a cyclization cascade catalyzed by the terpene cyclase dpmpB. The short chain dehydrogenase/reductase dpmpG then oxidizes the 8S hydroxy group to a ketone and the short chain dehydrogenase/reductase dpmpH reduces the ketone to the 8R hydroxy group to yield higginsianin B. Higginsianin B is further methylated by the methyltransferase dpmpI to produce the intermediate named FDDP B. The cytochrome P450 monooxygenase dpmpJ then oxidizes the C-26 methyl to primary alcohol, producing the final diterpenoid pyrone with a C-26 primary alcohol on the gamma-pyrone moiety named FDDP C. In Macrophomina phaseolina (strain MS6) (Charcoal rot fungus), this protein is Non-reducing polyketide synthase dpmpA.